A 210-amino-acid polypeptide reads, in one-letter code: Probable GTP-binding protein EngB (210 aa).

Residues 30 to 204 form the EngB-type G domain; the sequence is QGYEVAFAGR…YRVLADWMEL (175 aa). GTP is bound by residues 38-45, 64-68, 82-85, 149-152, and 182-185; these read GRSNAGKS, GRTQL, DLPG, TKAD, and LFSA. Mg(2+) is bound by residues Ser45 and Thr66.

The protein belongs to the TRAFAC class TrmE-Era-EngA-EngB-Septin-like GTPase superfamily. EngB GTPase family. Mg(2+) serves as cofactor.

Functionally, necessary for normal cell division and for the maintenance of normal septation. The polypeptide is Probable GTP-binding protein EngB (Pseudomonas putida (strain ATCC 700007 / DSM 6899 / JCM 31910 / BCRC 17059 / LMG 24140 / F1)).